A 244-amino-acid polypeptide reads, in one-letter code: Geranylgeranylglyceryl phosphate synthase (244 aa).

2 residues coordinate Mg(2+): Asp20 and Ser49. Residues Tyr169–Gly175, Gly200–Gly201, and Gly222–Thr223 contribute to the sn-glycerol 1-phosphate site.

It belongs to the GGGP/HepGP synthase family. Group II subfamily. Mg(2+) serves as cofactor.

It localises to the cytoplasm. The catalysed reaction is sn-glycerol 1-phosphate + (2E,6E,10E)-geranylgeranyl diphosphate = sn-3-O-(geranylgeranyl)glycerol 1-phosphate + diphosphate. It participates in membrane lipid metabolism; glycerophospholipid metabolism. Prenyltransferase that catalyzes the transfer of the geranylgeranyl moiety of geranylgeranyl diphosphate (GGPP) to the C3 hydroxyl of sn-glycerol-1-phosphate (G1P). This reaction is the first ether-bond-formation step in the biosynthesis of archaeal membrane lipids. The sequence is that of Geranylgeranylglyceryl phosphate synthase from Korarchaeum cryptofilum (strain OPF8).